A 470-amino-acid chain; its full sequence is Light-independent protochlorophyllide reductase subunit N (470 aa).

Cysteine 22, cysteine 47, and cysteine 107 together coordinate [4Fe-4S] cluster.

The protein belongs to the BchN/ChlN family. As to quaternary structure, protochlorophyllide reductase is composed of three subunits; ChlL, ChlN and ChlB. Forms a heterotetramer of two ChlB and two ChlN subunits. [4Fe-4S] cluster is required as a cofactor.

Its subcellular location is the plastid. It localises to the chloroplast. It carries out the reaction chlorophyllide a + oxidized 2[4Fe-4S]-[ferredoxin] + 2 ADP + 2 phosphate = protochlorophyllide a + reduced 2[4Fe-4S]-[ferredoxin] + 2 ATP + 2 H2O. The protein operates within porphyrin-containing compound metabolism; chlorophyll biosynthesis (light-independent). Functionally, component of the dark-operative protochlorophyllide reductase (DPOR) that uses Mg-ATP and reduced ferredoxin to reduce ring D of protochlorophyllide (Pchlide) to form chlorophyllide a (Chlide). This reaction is light-independent. The NB-protein (ChlN-ChlB) is the catalytic component of the complex. This is Light-independent protochlorophyllide reductase subunit N from Pinus koraiensis (Korean pine).